A 638-amino-acid chain; its full sequence is Nitrous-oxide reductase (638 aa).

The segment at residues 1 to 52 is a signal peptide (tat-type signal); the sequence is MSDKDSKNTPQVPEKLGLSRRGFLGASAVTGAAVAATALGGAVMTRESWAQA. The Cu cation site is built by H129, H130, and H178. Ca(2+) contacts are provided by Y256, E259, M267, D273, and N324. Cu cation-binding residues include H326, H382, and H433. K454 and E469 together coordinate Ca(2+). Positions 494, 583, 618, 620, 622, 626, and 629 each coordinate Cu cation. Residues 542 to 638 form a COX2-like region; the sequence is NKVRVYMTSM…MVGRMMVEPA (97 aa).

It belongs to the NosZ family. The protein in the C-terminal section; belongs to the cytochrome c oxidase subunit 2 family. In terms of assembly, homodimer. The cofactor is Ca(2+). Cu cation serves as cofactor. Post-translationally, predicted to be exported by the Tat system. The position of the signal peptide cleavage has not been experimentally proven. In terms of processing, the N-terminus is blocked.

It localises to the periplasm. The catalysed reaction is N2 + 2 Fe(III)-[cytochrome c] + H2O = nitrous oxide + 2 Fe(II)-[cytochrome c] + 2 H(+). The protein operates within nitrogen metabolism; nitrate reduction (denitrification); dinitrogen from nitrate: step 4/4. Functionally, nitrous-oxide reductase is part of a bacterial respiratory system which is activated under anaerobic conditions in the presence of nitrate or nitrous oxide. The protein is Nitrous-oxide reductase (nosZ) of Stutzerimonas stutzeri (Pseudomonas stutzeri).